The sequence spans 551 residues: RCC1 and BTB domain-containing protein 2 (551 aa).

RCC1 repeat units follow at residues 64–115 (NDEI…VLAT), 117–169 (DGEV…VLTS), 171–222 (GEVF…AVVD), 223–274 (TGEV…VLTD), 276–326 (GQIY…AAKS), and 328–382 (GGHV…TVAE). One can recognise a BTB domain in the interval 394 to 457 (ADLKFLVDGK…LYTDNISLPP (64 aa)).

It is found in the cytoplasmic vesicle. The protein resides in the secretory vesicle. It localises to the acrosome. The polypeptide is RCC1 and BTB domain-containing protein 2 (Rcbtb2) (Rattus norvegicus (Rat)).